A 90-amino-acid chain; its full sequence is Small ribosomal subunit protein bS20 (90 aa).

Residues 1–11 (MAHHKSAKKRI) are compositionally biased toward basic residues. The interval 1–22 (MAHHKSAKKRIRQTERRTEVNR) is disordered. Positions 12 to 22 (RQTERRTEVNR) are enriched in basic and acidic residues.

Belongs to the bacterial ribosomal protein bS20 family.

Its function is as follows. Binds directly to 16S ribosomal RNA. In Paramagnetospirillum magneticum (strain ATCC 700264 / AMB-1) (Magnetospirillum magneticum), this protein is Small ribosomal subunit protein bS20.